The following is a 413-amino-acid chain: MSHFAIVAPPLYSHAVALHALALEMAQRGHRVTFLTGNVASLAEQETERVAFYPLPASVQQAQRNVQQQSNGNLLRLIAAMSSLTDVLCQQLPAILQRLAVDALIVDEMEPAGSLVAEALGLPFISIACALPVNREPGLPLPVMPFHYAEDKRALRRFQVSERIYDALMYPHGQTILRHAQRFGLPERRRLDECLSPLAQISQSVPALDFPRRALPNCFHYVGALRYQPPPQVERSPRSTPRIFASLGTLQGHRLRLFQKIARACASVGAEVTIAHCDGLTPAQADSLYACGATEVVSFVDQPRYVAEANLVITHGGLNTVLDALAAATPVLAVPLSFDQPAVAARLVYNGLGRRVSRFARQQTLADEIAQLLGDETLHQRLATARQQLNDAGGTPRAATLIEQAIAGSESVS.

This sequence belongs to the UDP-glycosyltransferase family.

The enzyme catalyses all-trans-zeaxanthin + 2 UDP-alpha-D-glucose = zeaxanthin bis(beta-D-glucoside) + 2 UDP + 2 H(+). Its pathway is carotenoid biosynthesis; zeaxanthin diglucoside biosynthesis. Functionally, catalyzes the glycosylation reaction which converts zeaxanthin to zeaxanthin bis(beta-D-glucoside). The reaction proceeds in two steps with the monoglucoside as an intermediate. This is Zeaxanthin glucosyltransferase (crtX) from Pseudescherichia vulneris (Escherichia vulneris).